Here is a 297-residue protein sequence, read N- to C-terminus: ATP phosphoribosyltransferase (297 aa).

This sequence belongs to the ATP phosphoribosyltransferase family.

It localises to the cytoplasm. It carries out the reaction 1-(5-phospho-beta-D-ribosyl)-ATP + diphosphate = 5-phospho-alpha-D-ribose 1-diphosphate + ATP. Its pathway is amino-acid biosynthesis; L-histidine biosynthesis; L-histidine from 5-phospho-alpha-D-ribose 1-diphosphate: step 1/9. Functionally, catalyzes the condensation of ATP and 5-phosphoribose 1-diphosphate to form N'-(5'-phosphoribosyl)-ATP (PR-ATP). Has a crucial role in the pathway because the rate of histidine biosynthesis seems to be controlled primarily by regulation of the enzymatic activity. This is ATP phosphoribosyltransferase (HIS1) from Eremothecium gossypii (strain ATCC 10895 / CBS 109.51 / FGSC 9923 / NRRL Y-1056) (Yeast).